We begin with the raw amino-acid sequence, 691 residues long: Elongation factor G (691 aa).

Residues 8 to 283 (EKQRNIGIMA…AVVQYLPSPL (276 aa)) enclose the tr-type G domain. Residues 17–24 (AHIDAGKT), 81–85 (DTPGH), and 135–138 (NKMD) each bind GTP.

The protein belongs to the TRAFAC class translation factor GTPase superfamily. Classic translation factor GTPase family. EF-G/EF-2 subfamily.

It localises to the cytoplasm. In terms of biological role, catalyzes the GTP-dependent ribosomal translocation step during translation elongation. During this step, the ribosome changes from the pre-translocational (PRE) to the post-translocational (POST) state as the newly formed A-site-bound peptidyl-tRNA and P-site-bound deacylated tRNA move to the P and E sites, respectively. Catalyzes the coordinated movement of the two tRNA molecules, the mRNA and conformational changes in the ribosome. The protein is Elongation factor G of Lawsonia intracellularis (strain PHE/MN1-00).